A 322-amino-acid chain; its full sequence is CMP-sialic acid transporter 1 (322 aa).

The Cytoplasmic portion of the chain corresponds to 1 to 2 (MQ). Residues 3 to 23 (WYLVAALLTVLTSSQGILTTL) form a helical membrane-spanning segment. Residues 24 to 33 (SQSNGKYKYD) are Lumenal-facing. Residues 34 to 54 (YATIPFLAELFKLSFSSFFLW) form a helical membrane-spanning segment. Over 55 to 75 (KECQSSSPPRMTKEWRSIRLY) the chain is Cytoplasmic. The helical transmembrane segment at 76-96 (LVPSVIYLIHNNVQFATLTYV) threads the bilayer. Residues 97–100 (DPST) are Lumenal-facing. A helical transmembrane segment spans residues 101-120 (YQIMGNLKIVTTGILFRLVL). Over 121 to 126 (KRKLSN) the chain is Cytoplasmic. The chain crosses the membrane as a helical span at residues 127-144 (LQWMAVVLLAVGTTTSQV). The Lumenal segment spans residues 145 to 157 (KGCGDAPCDSLFS). The chain crosses the membrane as a helical span at residues 158–178 (APFQGYMLGILSACLSALAGV). Over 179-198 (YTEYLMKKNNDSLYWQNVQL) the chain is Cytoplasmic. A helical transmembrane segment spans residues 199 to 219 (YTFGVIFNMGWLIYGDFKAGF). Over 220–233 (ERGPWWQRLFNGYS) the chain is Lumenal. The helical transmembrane segment at 234–254 (ITTWMVVFNLGSTGLLVSWLM) threads the bilayer. The Cytoplasmic portion of the chain corresponds to 255-262 (KYSDNIVK). Residues 263 to 283 (VYSTSMAMLLTMVLSVYLFNV) form a helical membrane-spanning segment. The Lumenal portion of the chain corresponds to 284 to 286 (RAT).

It belongs to the nucleotide-sugar transporter family. CMP-Sialate:CMP antiporter (TC 2.A.7.12) subfamily. In terms of tissue distribution, expressed in roots, leaves and stalks.

Its subcellular location is the golgi apparatus membrane. Functionally, sugar transporter involved in the transport of CMP-sialic acid from the cytoplasm into the Golgi. May transport important nucleotide sugars such as CMP-Kdo (2-keto-3-deoxy-D-manno-octulosonic acid) in physiological conditions. The polypeptide is CMP-sialic acid transporter 1 (Oryza sativa subsp. japonica (Rice)).